The sequence spans 410 residues: Arginine deiminase (410 aa).

The Amidino-cysteine intermediate role is filled by cysteine 400.

It belongs to the arginine deiminase family.

Its subcellular location is the cytoplasm. It catalyses the reaction L-arginine + H2O = L-citrulline + NH4(+). The protein operates within amino-acid degradation; L-arginine degradation via ADI pathway; carbamoyl phosphate from L-arginine: step 1/2. In Streptococcus agalactiae serotype Ia (strain ATCC 27591 / A909 / CDC SS700), this protein is Arginine deiminase.